The sequence spans 245 residues: Uridylate kinase (245 aa).

20–23 (KLSG) contributes to the ATP binding site. Glycine 60 is a binding site for UMP. ATP is bound by residues glycine 61 and arginine 65. Residues aspartate 80 and 141–148 (AGLPYFST) contribute to the UMP site. ATP-binding residues include tyrosine 175 and aspartate 178.

The protein belongs to the UMP kinase family. Homohexamer.

The protein localises to the cytoplasm. The catalysed reaction is UMP + ATP = UDP + ADP. Its pathway is pyrimidine metabolism; CTP biosynthesis via de novo pathway; UDP from UMP (UMPK route): step 1/1. Inhibited by UTP. Functionally, catalyzes the reversible phosphorylation of UMP to UDP. This Paenarthrobacter aurescens (strain TC1) protein is Uridylate kinase.